The chain runs to 2153 residues: RNA-directed RNA polymerase L (2153 aa).

Mn(2+)-binding residues include His-36, Glu-54, Asp-97, Glu-110, and Val-111. Catalysis depends on Lys-124, which acts as the For endonuclease activity. The 187-residue stretch at 957-1143 folds into the RdRp catalytic domain; the sequence is TGKKIRFKRK…AVNQEMWKSM (187 aa). Residue Asp-1100 participates in Mg(2+) binding.

It belongs to the Bunyavirales RNA polymerase family. As to quaternary structure, interacts with the viral nucleoprotein. Requires Mn(2+) as cofactor. Mg(2+) is required as a cofactor.

It is found in the host cytoplasm. The protein resides in the host perinuclear region. It catalyses the reaction RNA(n) + a ribonucleoside 5'-triphosphate = RNA(n+1) + diphosphate. In terms of biological role, RNA-dependent RNA polymerase, which is responsible for the replication and transcription of the viral RNA genome using antigenomic RNA as an intermediate. During transcription, synthesizes subgenomic RNAs and assures their capping by a cap-snatching mechanism, which involves the endonuclease activity cleaving the host capped pre-mRNAs. These short capped RNAs are then used as primers for viral transcription. Cleaves ssRNA substrates but not DNA. Seems to downregulate the expression of its own and heterologous mRNAs through its endonuclease activity. The chain is RNA-directed RNA polymerase L from Black Creek Canal orthohantavirus (BCCV).